Reading from the N-terminus, the 559-residue chain is MGSSGDAWKLKDHPKLPKGKTVAVIVLDGWGEAKPNEFNAIHVAETPVMYSLKNGAPEKWRLIKAHGNAVGLPTEDDMGNSEVGHNALGAGRIFAQGAKLVDLALASGKIYEGEGFKYVKECFEKGTLHLIGLLSDGGVHSRLDQVQLLLKGAAKHGAKRIRVHALTDGRDVLDGSSVGFMETLENSLAQLREKGIDAQVASGGGRMYVTMDRYENDWDVVKRGWDAQVLGEAPHKFKDPVEAVKKLRQEPNANDQYLAPFVIVDDNGKPVAAILDGDAVVTFNFRADRMVMLAKALEYENFDKFDRVRVPKIRYAGMLQYHGELQLPSHYLVSPPEIARHSGEYLVRNGVRTFACSETVKFGHVTFFWNGNRSGYFNEKLEEYVEIPSDSGITFNVKPKMKALEIAERTRDAILSGKFDQVRVNLPNGDMVGHTGDIKATIEACKSADEAVKMILEAIEQVGGIYLVTADHGNAEDMVKRNKKGEPALDKNGNIQILTSHTCEPVPIAIGGPGLAPGVRFRQDLPTGGLANVAATFMNLHGSEAPSDYEPSLIEVVDN.

D28 and S81 together coordinate Mn(2+). S81 (phosphoserine intermediate) is an active-site residue. Residues H140, 170–171 (RD), R206, R213, 286–289 (RADR), and K361 each bind substrate. Mn(2+) is bound by residues D430, H434, D471, H472, and H501.

This sequence belongs to the BPG-independent phosphoglycerate mutase family. Monomer. Requires Mn(2+) as cofactor. As to expression, found ubiquitously in germinating seed.

It is found in the cytoplasm. It carries out the reaction (2R)-2-phosphoglycerate = (2R)-3-phosphoglycerate. Its pathway is carbohydrate degradation; glycolysis; pyruvate from D-glyceraldehyde 3-phosphate: step 3/5. Its function is as follows. Catalyzes the interconversion of 2-phosphoglycerate and 3-phosphoglycerate. This is 2,3-bisphosphoglycerate-independent phosphoglycerate mutase from Nicotiana tabacum (Common tobacco).